The chain runs to 450 residues: Ceramide glucosyltransferase (450 aa).

The Lumenal portion of the chain corresponds to 1 to 8; that stretch reads MSDSGTLS. The chain crosses the membrane as a helical span at residues 9–29; it reads LIGGIVFLVLWVVVWSICLLG. Residues 30-337 are Cytoplasmic-facing; the sequence is WRTARIRYAH…IRVRKKMTLA (308 aa). Asp96 is a short sequence motif (D1). Residue Asp148 is a short sequence motif, D2. Residue Asp286 is a short sequence motif, D3. The active-site Proton acceptor is Asp286. The (Q/R)XXRW motif lies at 323-327; the sequence is RRVRW. Residues 338-358 traverse the membrane as a helical segment; it reads ATLLEPLTESIISGLYGAWAI. Topologically, residues 359–361 are lumenal; sequence SRL. The chain crosses the membrane as a helical span at residues 362–382; the sequence is LGGNILPLFLLHMAAWISVDI. At 383–401 the chain is on the cytoplasmic side; it reads STKRALETNIKGIGPPESK. Residues 402 to 422 traverse the membrane as a helical segment; the sequence is VTFLMAWAARECLALPIWMLA. Residues 423 to 450 are Lumenal-facing; it reads MTSSEVVWRGQKYKIIASGEAIRLGDRN.

It belongs to the glycosyltransferase 2 family.

Its subcellular location is the golgi apparatus membrane. The enzyme catalyses an N-acylsphing-4-enine + UDP-alpha-D-glucose = a beta-D-glucosyl-(1&lt;-&gt;1')-N-acylsphing-4-enine + UDP + H(+). It functions in the pathway lipid metabolism; sphingolipid metabolism. Catalyzes the final step in the biosynthesis of the membrane lipid glucosylceramide (GluCer), the transfer of glucose to ceramide. Glucosylceramides play important roles in growth, differentiation and pathogenicity. Essential factor in determining the success of fungal infection by regulating survival of yeast cells during the initial colonization of the host lung. In Cryptococcus neoformans var. grubii serotype A (strain H99 / ATCC 208821 / CBS 10515 / FGSC 9487) (Filobasidiella neoformans var. grubii), this protein is Ceramide glucosyltransferase.